Consider the following 192-residue polypeptide: Adenylate kinase (192 aa).

An ATP-binding site is contributed by 10-18; the sequence is GVPGVGGTT.

It belongs to the archaeal adenylate kinase family. In terms of assembly, monomer.

Its subcellular location is the cytoplasm. The catalysed reaction is AMP + ATP = 2 ADP. The protein is Adenylate kinase of Methanococcus maripaludis (strain DSM 14266 / JCM 13030 / NBRC 101832 / S2 / LL).